The sequence spans 156 residues: Aspartate carbamoyltransferase regulatory chain (156 aa).

Zn(2+) contacts are provided by Cys-107, Cys-112, Cys-137, and Cys-140.

This sequence belongs to the PyrI family. In terms of assembly, contains catalytic and regulatory chains. Zn(2+) serves as cofactor.

Functionally, involved in allosteric regulation of aspartate carbamoyltransferase. The sequence is that of Aspartate carbamoyltransferase regulatory chain from Methanopyrus kandleri (strain AV19 / DSM 6324 / JCM 9639 / NBRC 100938).